Reading from the N-terminus, the 60-residue chain is Light-harvesting polypeptide B-885 alpha-2 chain (60 aa).

Topologically, residues 1 to 16 (SAPAQWKLWLVMDPRT) are cytoplasmic. Residues 17 to 37 (VMIGTAAWLGVLALLIHFLLL) form a helical membrane-spanning segment. Residue H33 participates in a bacteriochlorophyll binding. At 38–60 (GTERFNWIDTGLKEQKATAAAQA) the chain is on the periplasmic side.

It belongs to the antenna complex alpha subunit family. The core complex is formed by different alpha and beta chains, binding bacteriochlorophyll molecules, and arranged most probably in tetrameric structures disposed around the reaction center. The non-pigmented gamma chains may constitute additional components.

The protein resides in the cell inner membrane. In terms of biological role, antenna complexes are light-harvesting systems, which transfer the excitation energy to the reaction centers. This is Light-harvesting polypeptide B-885 alpha-2 chain from Rhodocyclus tenuis (Rhodospirillum tenue).